Here is a 267-residue protein sequence, read N- to C-terminus: MEPHLLMLGFLSFTIVPGCWAELCLYDPPEVPNATFKALSYKNGTILNCECKRGFRRLNELVYMACLGNSWSNNCQCTSNSHDNSREQVTPQPEGQKEQQTTDTQKSTQSVYQENLAGHCREPPPWRHEDTKRIYHFVEGQIVLYTCIQGYKALQRGPAISICKTVCGEIRWTHPQLTCVDEKEHHQFLASEESQGSRNSFPESEASCPTPNTDFSQLTEATTTMETFVFTKEYQVAVASCIFLLLSILLLSGFTWQHRWRKSRRTI.

The first 21 residues, 1–21 (MEPHLLMLGFLSFTIVPGCWA), serve as a signal peptide directing secretion. Residues 22–79 (ELCLYDPPEVPNATFKALSYKNGTILNCECKRGFRRLNELVYMACLGNSWSNNCQCTS) form the Sushi 1 domain. Residues 22–235 (ELCLYDPPEV…ETFVFTKEYQ (214 aa)) are Extracellular-facing. 3 disulfides stabilise this stretch: cysteine 24–cysteine 66, cysteine 49–cysteine 75, and cysteine 51–cysteine 77. Residues asparagine 33 and asparagine 43 are each glycosylated (N-linked (GlcNAc...) asparagine). Residues 82–93 (HDNSREQVTPQP) are compositionally biased toward polar residues. The tract at residues 82 to 108 (HDNSREQVTPQPEGQKEQQTTDTQKST) is disordered. A compositionally biased stretch (low complexity) spans 98 to 108 (EQQTTDTQKST). Residues 118–181 (GHCREPPPWR…WTHPQLTCVD (64 aa)) form the Sushi 2 domain. 2 disulfide bridges follow: cysteine 120–cysteine 163 and cysteine 147–cysteine 179. Residues 191–215 (SEESQGSRNSFPESEASCPTPNTDF) form a disordered region. The span at 192 to 215 (EESQGSRNSFPESEASCPTPNTDF) shows a compositional bias: polar residues. Residues 236–256 (VAVASCIFLLLSILLLSGFTW) traverse the membrane as a helical segment. At 257–267 (QHRWRKSRRTI) the chain is on the cytoplasmic side.

Non-covalent dimer of an alpha and a beta subunit. IL2R exists in 3 different forms: a high affinity dimer, an intermediate affinity monomer (beta subunit), and a low affinity monomer (alpha subunit). The high and intermediate affinity forms also associate with a gamma subunit.

It is found in the membrane. In terms of biological role, receptor for interleukin-2. The receptor is involved in the regulation of immune tolerance by controlling regulatory T cells (TREGs) activity. TREGs suppress the activation and expansion of autoreactive T-cells. This chain is Interleukin-2 receptor subunit alpha (Il2ra), found in Rattus norvegicus (Rat).